The chain runs to 74 residues: Large ribosomal subunit protein bL31 (74 aa).

Zn(2+) contacts are provided by Cys-16, Cys-18, Cys-38, and Cys-41.

The protein belongs to the bacterial ribosomal protein bL31 family. Type A subfamily. In terms of assembly, part of the 50S ribosomal subunit. The cofactor is Zn(2+).

In terms of biological role, binds the 23S rRNA. This chain is Large ribosomal subunit protein bL31, found in Streptomyces griseus subsp. griseus (strain JCM 4626 / CBS 651.72 / NBRC 13350 / KCC S-0626 / ISP 5235).